The following is a 372-amino-acid chain: GTPase Obg (372 aa).

An Obg domain is found at 1 to 159 (MKFIDEARIE…RMLKLELKVL (159 aa)). A disordered region spans residues 128–147 (LHFKSSTNRAPRQKTDGKPG). One can recognise an OBG-type G domain in the interval 160–334 (ADVGLLGMPN…LVYAIHDYLV (175 aa)). Residues 166-173 (GMPNAGKS), 191-195 (FTTLA), 213-216 (DIPG), 284-287 (NKLD), and 315-317 (SAL) contribute to the GTP site. 2 residues coordinate Mg(2+): serine 173 and threonine 193.

This sequence belongs to the TRAFAC class OBG-HflX-like GTPase superfamily. OBG GTPase family. In terms of assembly, monomer. It depends on Mg(2+) as a cofactor.

The protein resides in the cytoplasm. An essential GTPase which binds GTP, GDP and possibly (p)ppGpp with moderate affinity, with high nucleotide exchange rates and a fairly low GTP hydrolysis rate. Plays a role in control of the cell cycle, stress response, ribosome biogenesis and in those bacteria that undergo differentiation, in morphogenesis control. The sequence is that of GTPase Obg from Burkholderia mallei (strain NCTC 10247).